The following is a 213-amino-acid chain: MDFEKESRMMVEYQLKRRGISDEKVLNAFLKVKRHLFVPKDLERYAYDDCPLPIGEGQTISQPYIIGLMLQLLELRENDVVLEIGTGSGYQTALLAEIVRLVYTIERNETLAQRAKNKFEELGYKNIVLEVGDGTKGWTKEEIEFDGIIVSAAAPKVPEPLFSQLKIGGRMVIPIGSRTFQRLHKITKLEDGNMKVEYSDGCMFVPLIGEYGW.

Residue Ser-61 is part of the active site.

Belongs to the methyltransferase superfamily. L-isoaspartyl/D-aspartyl protein methyltransferase family.

Its subcellular location is the cytoplasm. It carries out the reaction [protein]-L-isoaspartate + S-adenosyl-L-methionine = [protein]-L-isoaspartate alpha-methyl ester + S-adenosyl-L-homocysteine. Its function is as follows. Catalyzes the methyl esterification of L-isoaspartyl residues in peptides and proteins that result from spontaneous decomposition of normal L-aspartyl and L-asparaginyl residues. It plays a role in the repair and/or degradation of damaged proteins. This is Protein-L-isoaspartate O-methyltransferase from Petrotoga mobilis (strain DSM 10674 / SJ95).